The sequence spans 217 residues: MLCVKNVSLRLPESRLLTNVNFTVDKGDIVTLMGPSGCGKSTLFSWMIGALAEQFSCTGELWLNEQRIDILPTAQRQIGILFQDALLFDQFSVGQNLLLALPATLKGNARRNAVNDALERSGLEGAFHQDPATLSGGQRARVALLRALLAQPKALLLDEPFSRLDVALRDNFRQWVFSEVRALAIPVVQVTHDLQDVPADSSVLDMAQWSENYNKLR.

The ABC transporter domain maps to 2–216 (LCVKNVSLRL…AQWSENYNKL (215 aa)). 34-41 (GPSGCGKS) lines the ATP pocket.

This sequence belongs to the ABC transporter superfamily.

Its function is as follows. Probably part of a binding-protein-dependent transport system YnjCD. Probably responsible for energy coupling to the transport system. This is an uncharacterized protein from Escherichia coli (strain K12).